Consider the following 198-residue polypeptide: MRLILLGPPGAGKGTQAQRLVEKHGIPQLSTGDMLRAAVQAGSEVGKRAKAVMDAGELVSDAIVNAIVAERIDQADCAKGFILDGYPRTLVQADAVESMLSERGIGLDTVIELVVDDRALVGRIVKRAEDAKAAGQPVRKDDNPAVFEERLREYYKKTAPLTGYYYAKGKLKTVDGLASIDAVTNEIEAVLTAAAEAR.

Position 10 to 15 (10 to 15 (GAGKGT)) interacts with ATP. Positions 30–59 (STGDMLRAAVQAGSEVGKRAKAVMDAGELV) are NMP. AMP contacts are provided by residues T31, R36, 57 to 59 (ELV), 85 to 88 (GYPR), and Q92. Residues 126–142 (KRAEDAKAAGQPVRKDD) form an LID region. Residue R127 participates in ATP binding. R139 and R150 together coordinate AMP. A178 contacts ATP.

This sequence belongs to the adenylate kinase family. Monomer.

The protein resides in the cytoplasm. The enzyme catalyses AMP + ATP = 2 ADP. Its pathway is purine metabolism; AMP biosynthesis via salvage pathway; AMP from ADP: step 1/1. Its function is as follows. Catalyzes the reversible transfer of the terminal phosphate group between ATP and AMP. Plays an important role in cellular energy homeostasis and in adenine nucleotide metabolism. This chain is Adenylate kinase, found in Mesorhizobium japonicum (strain LMG 29417 / CECT 9101 / MAFF 303099) (Mesorhizobium loti (strain MAFF 303099)).